The sequence spans 161 residues: Regulator of ribonuclease activity A (161 aa).

This sequence belongs to the RraA family. Homotrimer. Binds to both RNA-binding sites in the C-terminal region of Rne and to RhlB.

It localises to the cytoplasm. Functionally, globally modulates RNA abundance by binding to RNase E (Rne) and regulating its endonucleolytic activity. Can modulate Rne action in a substrate-dependent manner by altering the composition of the degradosome. Modulates RNA-binding and helicase activities of the degradosome. This Yersinia enterocolitica serotype O:8 / biotype 1B (strain NCTC 13174 / 8081) protein is Regulator of ribonuclease activity A.